The primary structure comprises 299 residues: ATP phosphoribosyltransferase (299 aa).

The protein belongs to the ATP phosphoribosyltransferase family. Long subfamily. Mg(2+) is required as a cofactor.

Its subcellular location is the cytoplasm. The catalysed reaction is 1-(5-phospho-beta-D-ribosyl)-ATP + diphosphate = 5-phospho-alpha-D-ribose 1-diphosphate + ATP. It functions in the pathway amino-acid biosynthesis; L-histidine biosynthesis; L-histidine from 5-phospho-alpha-D-ribose 1-diphosphate: step 1/9. Its activity is regulated as follows. Feedback inhibited by histidine. In terms of biological role, catalyzes the condensation of ATP and 5-phosphoribose 1-diphosphate to form N'-(5'-phosphoribosyl)-ATP (PR-ATP). Has a crucial role in the pathway because the rate of histidine biosynthesis seems to be controlled primarily by regulation of HisG enzymatic activity. This is ATP phosphoribosyltransferase from Campylobacter jejuni subsp. doylei (strain ATCC BAA-1458 / RM4099 / 269.97).